A 192-amino-acid polypeptide reads, in one-letter code: MLLSDRDLAAEIKAGTLALEPFDPALVQPSSIDVRLDKLFRVFNNHLYTHIDPSRQQDDLTSAVEVPDGEPFVLHPGEFVLASTLEVISLGDQLAGRLEGKSSLGRLGLLTHSTAGFIDPGFSGHVTLELSNVANLPIMLWPGMKIGQLCIFRLCSPAEHPYGSAVYGSRYQGQRGPTPSRSWQSWRTWPTR.

DCTP contacts are provided by residues 101 to 106, Asp119, 127 to 129, Gln148, Tyr162, and Gln174; these read KSSLGR and TLE. The Proton donor/acceptor role is filled by Glu129. Residues 169 to 192 are disordered; it reads SRYQGQRGPTPSRSWQSWRTWPTR. Positions 171–192 are enriched in polar residues; the sequence is YQGQRGPTPSRSWQSWRTWPTR.

It belongs to the dCTP deaminase family. As to quaternary structure, homotrimer.

The enzyme catalyses dCTP + 2 H2O = dUMP + NH4(+) + diphosphate. It participates in pyrimidine metabolism; dUMP biosynthesis; dUMP from dCTP: step 1/1. Functionally, bifunctional enzyme that catalyzes both the deamination of dCTP to dUTP and the hydrolysis of dUTP to dUMP without releasing the toxic dUTP intermediate. In Salinispora tropica (strain ATCC BAA-916 / DSM 44818 / JCM 13857 / NBRC 105044 / CNB-440), this protein is dCTP deaminase, dUMP-forming.